The primary structure comprises 84 residues: Putative defensin-like protein 165 (84 aa).

Residues 1–27 form the signal peptide; it reads MSTKLFSYFMLLVVLFSVLTIIPKTEA. Intrachain disulfides connect Cys-31–Cys-78, Cys-41–Cys-60, Cys-46–Cys-72, and Cys-50–Cys-74.

Belongs to the DEFL family.

It is found in the secreted. The chain is Putative defensin-like protein 165 (LCR12) from Arabidopsis thaliana (Mouse-ear cress).